We begin with the raw amino-acid sequence, 353 residues long: D-alanine--D-alanine ligase A (353 aa).

In terms of domain architecture, ATP-grasp spans K141 to A346. ATP is bound at residue E169–E224. Mg(2+)-binding residues include D300, E313, and N315.

Belongs to the D-alanine--D-alanine ligase family. Mg(2+) serves as cofactor. Requires Mn(2+) as cofactor.

The protein localises to the cytoplasm. The catalysed reaction is 2 D-alanine + ATP = D-alanyl-D-alanine + ADP + phosphate + H(+). Its pathway is cell wall biogenesis; peptidoglycan biosynthesis. In terms of biological role, cell wall formation. The protein is D-alanine--D-alanine ligase A of Brucella melitensis biotype 1 (strain ATCC 23456 / CCUG 17765 / NCTC 10094 / 16M).